The chain runs to 326 residues: Ribosomal large subunit pseudouridine synthase D (326 aa).

Residue D144 is part of the active site.

The protein belongs to the pseudouridine synthase RluA family.

It is found in the cytoplasm. It carries out the reaction uridine(1911/1915/1917) in 23S rRNA = pseudouridine(1911/1915/1917) in 23S rRNA. Its function is as follows. Responsible for synthesis of pseudouridine from uracil at positions 1911, 1915 and 1917 in 23S ribosomal RNA. The polypeptide is Ribosomal large subunit pseudouridine synthase D (Borreliella burgdorferi (strain ATCC 35210 / DSM 4680 / CIP 102532 / B31) (Borrelia burgdorferi)).